Reading from the N-terminus, the 425-residue chain is DNA replication and repair protein RecF (425 aa).

30 to 37 contributes to the ATP binding site; the sequence is GPNGHGKT.

This sequence belongs to the RecF family.

The protein localises to the cytoplasm. In terms of biological role, the RecF protein is involved in DNA metabolism; it is required for DNA replication and normal SOS inducibility. RecF binds preferentially to single-stranded, linear DNA. It also seems to bind ATP. The chain is DNA replication and repair protein RecF from Corynebacterium jeikeium (strain K411).